The chain runs to 357 residues: Inositol-tetrakisphosphate 1-kinase 3 (357 aa).

1D-myo-inositol 1,3,4-trisphosphate contacts are provided by Lys-56 and Lys-98. ATP contacts are provided by Arg-133 and Lys-183. 2 residues coordinate 1D-myo-inositol 1,3,4-trisphosphate: His-190 and Lys-222. Residues 211-222 (QEFVNHGGVLFK), Ser-237, and Ser-262 contribute to the ATP site. Mg(2+)-binding residues include Asp-302, Asp-317, and Asn-319. Asn-319 is a 1D-myo-inositol 1,3,4-trisphosphate binding site.

Belongs to the ITPK1 family. In terms of assembly, monomer. Mg(2+) serves as cofactor. In terms of tissue distribution, expressed in roots, leaves, flowers, anthers and embryos.

It carries out the reaction 1D-myo-inositol 3,4,5,6-tetrakisphosphate + ATP = 1D-myo-inositol 1,3,4,5,6-pentakisphosphate + ADP + H(+). The enzyme catalyses 1D-myo-inositol 1,3,4-trisphosphate + ATP = 1D-myo-inositol 1,3,4,5-tetrakisphosphate + ADP + H(+). It catalyses the reaction 1D-myo-inositol 1,3,4-trisphosphate + ATP = 1D-myo-inositol 1,3,4,6-tetrakisphosphate + ADP + H(+). In terms of biological role, kinase that can phosphorylate various inositol polyphosphate such as Ins(3,4,5,6)P4 or Ins(1,3,4)P3 and participates in phytic acid biosynthesis in developing seeds. Phytic acid is the primary storage form of phosphorus in cereal grains and other plant seeds. This is Inositol-tetrakisphosphate 1-kinase 3 from Oryza sativa subsp. japonica (Rice).